Reading from the N-terminus, the 1114-residue chain is Zinc finger E-box-binding homeobox 1 (1114 aa).

Disordered regions lie at residues 1-105 and 142-163; these read MADG…EVGC and APEE…NGTP. Residues 15–30 are compositionally biased toward low complexity; it reads PRRNNVTNYNNVIEAN. Residues 149 to 160 show a composition bias toward polar residues; that stretch reads QGTPEASGQDEN. C2H2-type zinc fingers lie at residues 170 to 193, 200 to 222, and 240 to 262; these read LTCP…KYRH, FSCS…MTSH, and FKCT…LRIH. The C2H2-type 4; atypical zinc finger occupies 268–292; it reads YECPNCKKRFSHSGSYSSHISSKKC. Disordered stretches follow at residues 304–326, 491–529, 553–588, and 636–716; these read SGLK…PARP, NLKK…TNDS, KNPP…GQPP, and QISV…SRNS. The segment covering 309-326 has biased composition (low complexity); that stretch reads SQCSSPSLSASPGSPARP. Positions 504-523 are enriched in basic and acidic residues; it reads KNEKLPEDLTVKSEKDKNFE. Composition is skewed to polar residues over residues 573–584 and 636–681; these read APSETGENNLSP and QISV…QNPA. Residues 581 to 640 constitute a DNA-binding region (homeobox; atypical); the sequence is NLSPGQPPLKNLLSLLKAYYALNAQPSAEELSKIADSVNLPLDVVKKWFEKMQAGQISVQ. Over residues 682-716 the composition is skewed to low complexity; that stretch reads NTSKSQTSSGGSTQNGSRSSTPSPSPLNLSSSRNS. The CTBP-binding motif signature appears at 767 to 771; that stretch reads PLNLT. 2 stretches are compositionally biased toward polar residues: residues 852–866 and 874–890; these read AVQE…ANGS and SSEG…SDST. The disordered stretch occupies residues 852-898; the sequence is AVQETPPKQTQANGSQDERQDTSSEGVSNVEDQNDSDSTPPKKKMRK. C2H2-type zinc fingers lie at residues 904 to 926 and 932 to 954; these read YACD…KYEH and HECG…MRLH. The segment at 960–981 adopts a C2H2-type 7; atypical zinc-finger fold; that stretch reads YQCDKCGKRFSHSGSYSQHMNH. The tract at residues 989-1114 is disordered; the sequence is EAEERDSTEQ…QVSEEKTNKA (126 aa). Residues 1031-1047 show a composition bias toward acidic residues; it reads EEEEDSEKEEEEEEEKD. Basic and acidic residues predominate over residues 1048 to 1062; that stretch reads VEGLQEEKECRKLQD. Over residues 1063–1078 the composition is skewed to acidic residues; sequence VEEEEEVEEEEEEEEG. Positions 1079-1089 are enriched in basic and acidic residues; that stretch reads KTEGNKNDDVV.

Belongs to the delta-EF1/ZFH-1 C2H2-type zinc-finger family. As to expression, expression is developmentally regulated with high expression in mesoderm, nervous system and lens.

Its subcellular location is the nucleus. Its function is as follows. Acts as a transcriptional repressor. Positively regulates neuronal differentiation. Represses transcription by binding to the E box-containing promoter. Binds to delta 1-crystallin enhancer core and represses lens-specific transcription. It also binds many other non-lens specific DNA sequences. The sequence is that of Zinc finger E-box-binding homeobox 1 (ZEB1) from Gallus gallus (Chicken).